Consider the following 27-residue polypeptide: Secretin (27 aa).

Leucine 27 is subject to Leucine amide.

The protein belongs to the glucagon family.

It localises to the secreted. Hormone involved in different processes, such as regulation of the pH of the duodenal content, food intake and water homeostasis. Exerts its biological effects by binding to secretin receptor (SCTR), a G-protein coupled receptor expressed in the basolateral domain of several cells. Acts as a key gastrointestinal hormone by regulating the pH of the duodenal content. Secreted by S cells of the duodenum in the crypts of Lieberkuehn and regulates the pH of the duodenum by (1) inhibiting the secretion of gastric acid from the parietal cells of the stomach and (2) stimulating the production of bicarbonate (NaHCO(3)) from the ductal cells of the pancreas. Production of bicarbonate is essential to neutralize the pH and ensure no damage is done to the small intestine by the gastric acid. In addition to regulating the pH of the duodenal content, plays a central role in diet induced thermogenesis: acts as a non-sympathetic brown fat (BAT) activator mediating prandial thermogenesis, which consequentially induces satiation. Mechanistically, secretin released by the gut after a meal binds to secretin receptor (SCTR) in brown adipocytes, activating brown fat thermogenesis by stimulating lipolysis, which is sensed in the brain and promotes satiation. Also able to stimulate lipolysis in white adipocytes. Also plays an important role in cellular osmoregulation: released into the systemic circulation in response to hyperosmolality and acts at different levels in the hypothalamus, pituitary and kidney to regulate water homeostasis. Also plays a role in the central nervous system, possibly by acting as a neuropeptide hormone: required for hippocampal synaptic function and neural progenitor cells maintenance. This chain is Secretin, found in Oryctolagus cuniculus (Rabbit).